Here is a 191-residue protein sequence, read N- to C-terminus: Ribosome maturation factor RimP (191 aa).

Belongs to the RimP family.

It localises to the cytoplasm. In terms of biological role, required for maturation of 30S ribosomal subunits. This is Ribosome maturation factor RimP from Caulobacter vibrioides (strain NA1000 / CB15N) (Caulobacter crescentus).